We begin with the raw amino-acid sequence, 317 residues long: Acetyl-coenzyme A carboxylase carboxyl transferase subunit alpha (317 aa).

One can recognise a CoA carboxyltransferase C-terminal domain in the interval 33-294; sequence NLDDEITRLQ…KKRLLADLAD (262 aa).

The protein belongs to the AccA family. Acetyl-CoA carboxylase is a heterohexamer composed of biotin carboxyl carrier protein (AccB), biotin carboxylase (AccC) and two subunits each of ACCase subunit alpha (AccA) and ACCase subunit beta (AccD).

It localises to the cytoplasm. The enzyme catalyses N(6)-carboxybiotinyl-L-lysyl-[protein] + acetyl-CoA = N(6)-biotinyl-L-lysyl-[protein] + malonyl-CoA. The protein operates within lipid metabolism; malonyl-CoA biosynthesis; malonyl-CoA from acetyl-CoA: step 1/1. Its function is as follows. Component of the acetyl coenzyme A carboxylase (ACC) complex. First, biotin carboxylase catalyzes the carboxylation of biotin on its carrier protein (BCCP) and then the CO(2) group is transferred by the carboxyltransferase to acetyl-CoA to form malonyl-CoA. In Histophilus somni (strain 2336) (Haemophilus somnus), this protein is Acetyl-coenzyme A carboxylase carboxyl transferase subunit alpha.